Reading from the N-terminus, the 311-residue chain is 4-diphosphocytidyl-2-C-methyl-D-erythritol kinase (311 aa).

Lysine 16 is a catalytic residue. An ATP-binding site is contributed by 100 to 110; the sequence is PIGAGLAGGSS. Aspartate 142 is an active-site residue.

It belongs to the GHMP kinase family. IspE subfamily.

The enzyme catalyses 4-CDP-2-C-methyl-D-erythritol + ATP = 4-CDP-2-C-methyl-D-erythritol 2-phosphate + ADP + H(+). It functions in the pathway isoprenoid biosynthesis; isopentenyl diphosphate biosynthesis via DXP pathway; isopentenyl diphosphate from 1-deoxy-D-xylulose 5-phosphate: step 3/6. Catalyzes the phosphorylation of the position 2 hydroxy group of 4-diphosphocytidyl-2C-methyl-D-erythritol. The sequence is that of 4-diphosphocytidyl-2-C-methyl-D-erythritol kinase from Prochlorococcus marinus (strain AS9601).